A 422-amino-acid chain; its full sequence is Target of rapamycin complex 2 subunit bit61 (422 aa).

A compositionally biased stretch (polar residues) spans 48-69; the sequence is VTTKESNVGDSDTTENIKSPFN. The interval 48-101 is disordered; that stretch reads VTTKESNVGDSDTTENIKSPFNGQWPFSRRSSQSSSHPVFEETHWSKHSKRPGK. Phosphoserine occurs at positions 109, 132, and 201.

It belongs to the BIT61 family. In terms of assembly, the target of rapamycin complex 2 (TORC2) is composed of at least bit61, pop3/wat1, sin1, ste20 and tor1. In terms of processing, either Thr-23, Thr-25 or Ser-26 and Ser-78 or Ser-79 are phosphorylated as well.

Its subcellular location is the cytoplasm. It localises to the nucleus. In terms of biological role, component of TORC2, which regulates multiple cellular processes to control cell growth in response to environmental signals. TORC2 is required for cell survival under various stress conditions. TORC2 positively controls G1 cell-cycle arrest, sexual development and amino acid uptake. Positively regulates amino acid uptake through the control of expression of amino acid permeases. The chain is Target of rapamycin complex 2 subunit bit61 from Schizosaccharomyces pombe (strain 972 / ATCC 24843) (Fission yeast).